Reading from the N-terminus, the 513-residue chain is ATP synthase subunit alpha (513 aa).

Position 169-176 (169-176) interacts with ATP; that stretch reads GDRQTGKT.

This sequence belongs to the ATPase alpha/beta chains family. F-type ATPases have 2 components, CF(1) - the catalytic core - and CF(0) - the membrane proton channel. CF(1) has five subunits: alpha(3), beta(3), gamma(1), delta(1), epsilon(1). CF(0) has three main subunits: a(1), b(2) and c(9-12). The alpha and beta chains form an alternating ring which encloses part of the gamma chain. CF(1) is attached to CF(0) by a central stalk formed by the gamma and epsilon chains, while a peripheral stalk is formed by the delta and b chains.

The protein localises to the cell inner membrane. The catalysed reaction is ATP + H2O + 4 H(+)(in) = ADP + phosphate + 5 H(+)(out). Functionally, produces ATP from ADP in the presence of a proton gradient across the membrane. The alpha chain is a regulatory subunit. This chain is ATP synthase subunit alpha, found in Escherichia coli O81 (strain ED1a).